The sequence spans 274 residues: MPIQKCKPTSPGRRFVEKVVHDHLHKGAPYAPLVEAKKRTGGRNNNGHITTRHVGGGHKQHYRIVDFKRNKDGVPAVVERIEYDPNRTAHIALLKYADGERRYIIAPKGLRAGDKVQSGNDAPIRPGNCLPLRNMPIGSTLHNVELKIGKGAQLARSAGASVQLLGRDGSYAIIRLRSGEMRKVHVECRAVIGEVSNQENNLRSLGKAGAARWRGVRPTVRGMAMNPIDHPHGGGEGRNKGIQPVSPWGQKAKGYKTRTNKRTTKMIIRDRRVK.

2 disordered regions span residues 38–57 (KRTG…VGGG) and 224–256 (AMNP…KGYK). Positions 229 to 239 (DHPHGGGEGRN) are enriched in basic and acidic residues.

The protein belongs to the universal ribosomal protein uL2 family. As to quaternary structure, part of the 50S ribosomal subunit. Forms a bridge to the 30S subunit in the 70S ribosome.

In terms of biological role, one of the primary rRNA binding proteins. Required for association of the 30S and 50S subunits to form the 70S ribosome, for tRNA binding and peptide bond formation. It has been suggested to have peptidyltransferase activity; this is somewhat controversial. Makes several contacts with the 16S rRNA in the 70S ribosome. The polypeptide is Large ribosomal subunit protein uL2 (Acinetobacter baumannii (strain AB307-0294)).